The sequence spans 563 residues: uncharacterized protein (563 aa).

At 1–13 (MASRSCICQVSAG) the chain is on the cytoplasmic side. The chain crosses the membrane as a helical span at residues 14-34 (IIFLIGAALLVAGLVIVLNVF). At 35 to 528 (PNIVNNQIND…LFTPVSTVNT (494 aa)) the chain is on the lumenal side. N-linked (GlcNAc...) asparagine glycans are attached at residues N43, N112, N133, N188, N265, N295, N315, and N502. Residues 529–549 (ICWIAVGLGAGLIALSIVMVI) traverse the membrane as a helical segment. Topologically, residues 550–563 (VSFCCFRDEHHKTS) are cytoplasmic.

The protein belongs to the CD36 family.

The protein resides in the membrane. This is an uncharacterized protein from Caenorhabditis elegans.